The following is a 103-amino-acid chain: Large ribosomal subunit protein bL21 (103 aa).

It belongs to the bacterial ribosomal protein bL21 family. As to quaternary structure, part of the 50S ribosomal subunit. Contacts protein L20.

Functionally, this protein binds to 23S rRNA in the presence of protein L20. The sequence is that of Large ribosomal subunit protein bL21 from Hamiltonella defensa subsp. Acyrthosiphon pisum (strain 5AT).